Reading from the N-terminus, the 355-residue chain is Ataxin-3 (355 aa).

Residue Met1 forms a Peptide (Met-Gly) (interchain with G-Cter in ubiquitin) linkage. In terms of domain architecture, Josephin spans 1-180 (MESIFHEKQE…DCEADQLLQM (180 aa)). Cys14 functions as the Nucleophile in the catalytic mechanism. The Proton acceptor role is filled by His119. Asn134 is a catalytic residue. A Glycyl lysine isopeptide (Lys-Gly) (interchain with G-Cter in ubiquitin) cross-link involves residue Lys200. Ser219 bears the Phosphoserine mark. UIM domains follow at residues 224–243 (EDED…IDME) and 244–263 (DEEA…SSRS). The segment covering 257 to 275 (MQGSSRSMCENSPQTSSPD) has biased composition (polar residues). The segment at 257–355 (MQGSSRSMCE…KDNLKAERKK (99 aa)) is disordered. 3 positions are modified to phosphoserine: Ser268, Ser272, and Ser273. A compositionally biased stretch (basic and acidic residues) spans 279–289 (EELRRRREAYF). Ser321 carries the phosphoserine modification. The 20-residue stretch at 329 to 348 (SEEDMLRAAVTMSLETAKDN) folds into the UIM 3 domain. The segment covering 344-355 (TAKDNLKAERKK) has biased composition (basic and acidic residues).

In terms of assembly, interacts with STUB1/CHIP (when monoubiquitinated). Interacts with DNA repair proteins RAD23A and RAD23B. Interacts with BECN1 (via its poly-Gln domain). Interacts with PRKN, UBR2, VCP and tubulin. Post-translationally, monoubiquitinated by UBE2W, possibly leading to activate the deubiquitinating enzyme activity.

Its subcellular location is the nucleus matrix. The protein localises to the nucleus. The protein resides in the lysosome membrane. The catalysed reaction is Thiol-dependent hydrolysis of ester, thioester, amide, peptide and isopeptide bonds formed by the C-terminal Gly of ubiquitin (a 76-residue protein attached to proteins as an intracellular targeting signal).. Its function is as follows. Deubiquitinating enzyme involved in protein homeostasis maintenance, transcription, cytoskeleton regulation, myogenesis and degradation of misfolded chaperone substrates. Binds long polyubiquitin chains and trims them, while it has weak or no activity against chains of 4 or less ubiquitins. Involved in degradation of misfolded chaperone substrates via its interaction with STUB1/CHIP: recruited to monoubiquitinated STUB1/CHIP, and restricts the length of ubiquitin chain attached to STUB1/CHIP substrates and preventing further chain extension. Interacts with key regulators of transcription and represses transcription: acts as a histone-binding protein that regulates transcription. Acts as a negative regulator of mTORC1 signaling in response to amino acid deprivation by mediating deubiquitination of RHEB, thereby promoting RHEB inactivation by the TSC-TBC complex. Regulates autophagy via the deubiquitination of 'Lys-402' of BECN1 leading to the stabilization of BECN1. In Mus musculus (Mouse), this protein is Ataxin-3 (Atxn3).